Here is a 478-residue protein sequence, read N- to C-terminus: DKDSYKVSGGLHGVGVSCVNALSTDMKVTVYSHGKVHQQEYKKGIPQYDVKEIGESEIHGTKVQFLPDDSIFTSSEYKYETIANRLRELSFLNKGIRITLQDHREVDADGKSEIETFHSEGGLREFVEYVDSTRERLIPRPLYMESDKGPIPVEVAMLYNTSYSENVFSYVNNINTVEGGTHVAGFRRALTRTLKSYADKSGMLEKLKMEVTGDDFREGLTAVISVKVQEPQFEGQTKTKLGNSDVMGAVDQVVGEMLNTYLEENPKEAKIIVQKVILAAQARNAARKAREMVQRKNVLSGSGLPGKLADCSESDPEKCEIYLVEGDSAGGSAKQGRDRKYHAILPLRGKILNVEKAQEHRIYENDEIKNMITALGVSFGTEEGEKVLNLTKLRYHKVIIMTDADIDGSHIRTLILTFFFRYMRALIDGGHVYIAQPPLYLVKRGKEEKYCWTEEQREVAVKELAKDGKEDSVGIQRY.

The Toprim domain occupies 319 to 438 (CEIYLVEGDS…GGHVYIAQPP (120 aa)). Residues E325, D403, and D405 each contribute to the Mg(2+) site.

This sequence belongs to the type II topoisomerase GyrB family. As to quaternary structure, heterotetramer, composed of two GyrA and two GyrB chains. In the heterotetramer, GyrA contains the active site tyrosine that forms a transient covalent intermediate with DNA, while GyrB binds cofactors and catalyzes ATP hydrolysis. The cofactor is Mg(2+). Mn(2+) serves as cofactor. Ca(2+) is required as a cofactor.

The protein resides in the cytoplasm. It catalyses the reaction ATP-dependent breakage, passage and rejoining of double-stranded DNA.. Its function is as follows. A type II topoisomerase that negatively supercoils closed circular double-stranded (ds) DNA in an ATP-dependent manner to modulate DNA topology and maintain chromosomes in an underwound state. Negative supercoiling favors strand separation, and DNA replication, transcription, recombination and repair, all of which involve strand separation. Also able to catalyze the interconversion of other topological isomers of dsDNA rings, including catenanes and knotted rings. Type II topoisomerases break and join 2 DNA strands simultaneously in an ATP-dependent manner. This is DNA gyrase subunit B (gyrB) from Cytophaga aurantiaca.